Here is a 113-residue protein sequence, read N- to C-terminus: MVLDTKRSLKIKIDALKRLEKDYMLYKKEEQLQIENVERFKADETKDIYDVKKQIEILDENKTMIIDSVSRVTAFLVQFSEFLEEHKNEDDGSEIWKDSYDIIDQISTKFLGE.

This sequence belongs to the TBCA family. As to quaternary structure, supercomplex made of cofactors A to E. Cofactors A and D function by capturing and stabilizing tubulin in a quasi-native conformation. Cofactor E binds to the cofactor D-tubulin complex; interaction with cofactor C then causes the release of tubulin polypeptides that are committed to the native state.

It localises to the cytoplasm. The protein localises to the cytoskeleton. Functionally, tubulin-folding protein; involved in the early step of the tubulin folding pathway. This chain is Tubulin-specific chaperone A (tbca), found in Dictyostelium discoideum (Social amoeba).